The sequence spans 132 residues: Ubiquinol-cytochrome c reductase complex assembly factor 4 (132 aa).

Positions 1–15 (MNRVLCAPAAGAVRA) are cleaved as a signal peptide. Residues 16-78 (LRLIGWASRS…GKGHQRPWWK (63 aa)) lie on the Mitochondrial matrix side of the membrane. A disordered region spans residues 29–72 (LPGSRDRAHPAAEEEDDPDRPIEFSSSKANPHRWSVGHTMGKGH). A helical membrane pass occupies residues 79-95 (VLPLSCFLVALIIWCYL). At 96 to 132 (REESEADQWLRQVWGEVPEPSDRSEEPETPAAYRART) the chain is on the mitochondrial intermembrane side. The tract at residues 110–132 (GEVPEPSDRSEEPETPAAYRART) is disordered.

This sequence belongs to the UQCC4 family. Forms a complex, named COMB/coordinator of mitochondrial CYTB biogenesis, composed of UQCC1, UQCC2, UQCC4, UQCC5 and UQCC6; stabilizes nascent cytochrome b/MT-CYB and promotes its membrane insertion. Forms a complex, named COMA, composed of UQCC1, UQCC2 and UQCC4; activates MT-CYB translation. Forms a complex, named COMC, composed of UQCC1, UQCC2; UQCC3 and UQCC4; mediates MT-CYB hemylation and association with the first nuclear-encoded complex III subunit UQCRQ. Complexes COMA and COMB are bound to the mitochondrion inner membrane by UQCC4.

The protein localises to the mitochondrion inner membrane. Functionally, required for the assembly and stability of the mitochondrial ubiquinol-cytochrome c reductase complex (complex III (CIII) or cytochrome b-c1 complex), a multisubunit transmembrane complex that is part of the mitochondrial electron transport chain (ETC) which drives oxidative phosphorylation. The polypeptide is Ubiquinol-cytochrome c reductase complex assembly factor 4 (Homo sapiens (Human)).